A 352-amino-acid polypeptide reads, in one-letter code: C-C chemokine receptor type 5 (352 aa).

Residues M1–A30 are Extracellular-facing. Y3 carries the post-translational modification Sulfotyrosine. O-linked (GalNAc...) serine glycans are attached at residues S6 and S7. Residues Y10, Y14, and Y15 each carry the sulfotyrosine modification. 2 disulfide bridges follow: C20/C269 and C101/C178. The chain crosses the membrane as a helical span at residues R31–C58. Residues K59–Y68 are Cytoplasmic-facing. The chain crosses the membrane as a helical span at residues L69–Y89. Topologically, residues A90 to Q102 are extracellular. A helical membrane pass occupies residues L103–I124. Topologically, residues D125–T141 are cytoplasmic. The chain crosses the membrane as a helical span at residues V142 to F166. The Extracellular segment spans residues T167–I198. Residues V199 to L218 form a helical membrane-spanning segment. At K219 to R235 the chain is on the cytoplasmic side. Residues L236–F260 form a helical membrane-spanning segment. At Q261–Q277 the chain is on the extracellular side. A helical membrane pass occupies residues A278–G301. At E302–L352 the chain is on the cytoplasmic side. 3 S-palmitoyl cysteine lipidation sites follow: C321, C323, and C324. A phosphoserine; by BARK1 mark is found at S336, S337, S342, and S349.

This sequence belongs to the G-protein coupled receptor 1 family. As to quaternary structure, interacts with PRAF2. Efficient ligand binding to CCL3/MIP-1alpha and CCL4/MIP-1beta requires sulfation, O-glycosylation and sialic acid modifications. Glycosylation on Ser-6 is required for efficient binding of CCL4. Interacts with GRK2. Interacts with ARRB1 and ARRB2. Interacts with CNIH4. Interacts with S100A4; this interaction stimulates T-lymphocyte chemotaxis. In terms of processing, sulfated on at least 2 of the N-terminal tyrosines. Sulfation is required for efficient binding of the chemokines, CCL3 and CCL4. Post-translationally, palmitoylation in the C-terminal is important for cell surface expression. Phosphorylation on serine residues in the C-terminal is stimulated by binding CC chemokines especially by APO-RANTES. In terms of processing, O-glycosylated, but not N-glycosylated. Ser-6 appears to be the major site even if Ser-7 may be also O-glycosylated. Also sialylated glycans present which contribute to chemokine binding. Thr-16 and Ser-17 may also be glycosylated and, if so, with small moieties such as a T-antigen.

The protein resides in the cell membrane. In terms of biological role, receptor for a number of inflammatory CC-chemokines including CCL3/MIP-1-alpha, CCL4/MIP-1-beta and RANTES and subsequently transduces a signal by increasing the intracellular calcium ion level. May play a role in the control of granulocytic lineage proliferation or differentiation. Participates in T-lymphocyte migration to the infection site by acting as a chemotactic receptor. The protein is C-C chemokine receptor type 5 (CCR5) of Cercopithecus ascanius (Black-cheeked white-nosed monkey).